A 176-amino-acid chain; its full sequence is Adipose-secreted signaling protein (176 aa).

A disordered region spans residues Met1–Thr30. A compositionally biased stretch (polar residues) spans Glu20 to Thr30.

It belongs to the ADISSP family.

May be involved in thermogenesis and glucose homeostasis. This is Adipose-secreted signaling protein from Taeniopygia guttata (Zebra finch).